The chain runs to 451 residues: Opioid growth factor receptor-like protein 1 (451 aa).

2 disordered regions span residues 1–89 and 308–451; these read MGNL…TAKP and ENFI…VLVQ. Over residues 43-66 the composition is skewed to low complexity; that stretch reads PGQESEQPAQPPEQAGGRPGASPA. Residues 322-341 are compositionally biased toward polar residues; sequence GSKAQKMSSPLASSHNSQTS. Basic and acidic residues-rich tracts occupy residues 362–381 and 389–399; these read TAED…DRPS and AKPRNTEKDSN. Over residues 431 to 443 the composition is skewed to low complexity; it reads NDNQDNENPGNTN.

Belongs to the opioid growth factor receptor family. In terms of tissue distribution, ubiquitous.

This is Opioid growth factor receptor-like protein 1 (OGFRL1) from Homo sapiens (Human).